A 208-amino-acid polypeptide reads, in one-letter code: MSGKTSYKDLLLAPIAKNNPIALQILGICSALAVTTKLETAFVMAIAVTLVTGLSNLFVSLIRNYIPNSIRIIVQLAIIASLVIVVDQILKAYAYGLSKQLSVFVGLIITNCIVMGRAEAFAMKSPPVESFVDGIGNGLGYGSMLIIVAFFRELIGSGKLFGMTIFETIQNGGWYQANGLFLLAPSAFFIIGFVIWGLRTWKPEQQEK.

5 consecutive transmembrane segments (helical) span residues 42-62 (FVMA…VSLI), 72-92 (IIVQ…ILKA), 103-123 (VFVG…AFAM), 131-151 (FVDG…VAFF), and 178-198 (NGLF…IWGL).

Belongs to the NqrDE/RnfAE family. In terms of assembly, composed of six subunits; NqrA, NqrB, NqrC, NqrD, NqrE and NqrF.

The protein localises to the cell inner membrane. It catalyses the reaction a ubiquinone + n Na(+)(in) + NADH + H(+) = a ubiquinol + n Na(+)(out) + NAD(+). Its function is as follows. NQR complex catalyzes the reduction of ubiquinone-1 to ubiquinol by two successive reactions, coupled with the transport of Na(+) ions from the cytoplasm to the periplasm. NqrA to NqrE are probably involved in the second step, the conversion of ubisemiquinone to ubiquinol. The chain is Na(+)-translocating NADH-quinone reductase subunit D from Haemophilus influenzae (strain 86-028NP).